The sequence spans 597 residues: MSLPIRNVAIIAHVDHGKTTLVDALLKQSGIFREGEDVPVCVMDSNDLERERGITILSKNTAVRYQDTLINIVDTPGHADFGGEVERVLGMVDGCVLIVDANEGPMPQTRFVLKKALEKGLRPLVVVNKIDRPRADPNTAVDKVFDLFVELGADDDQCDFTTLFASGLGGFAKESLDDDSEDMKPLFEAILHHVPPPAGDPNKPLQLQVTTLDYSDYLGRIIIGRIHNGTVKAGQQAALVKEDGSIAKGKVSKLLGFEGLNRIELPEASAGYIVAIAGFADANIGETLTCPDEPQALPLIKVDEPTLQMTFSVNDSPFAGQEGKFVTSRQIRDRLNRELETNVALRVEDGESAEQFLVSGRGELHLGILIETMRREGYEFQVAQPQVIYREVNGQPCEPVEYLVLDVPEAAVGACIERLGQRRGEMQDMQTSVNGRTQLEFVIPARGLLGFRGDFIRITRGEGIMNHSFLEYRPMSGDLETRYNGVMVAFEEGVATFYAMKNAEDRGVFFITPGTKVYKGMIIGEHNRPQDIELNVCKTKQLTNHRSATGDELVQLQAPEDMNLERALEYIGPDELVEITPESIRLRKVARKKLVKR.

The tr-type G domain occupies 3-198; that stretch reads LPIRNVAIIA…AILHHVPPPA (196 aa). GTP contacts are provided by residues 15-20 and 128-131; these read DHGKTT and NKID.

This sequence belongs to the TRAFAC class translation factor GTPase superfamily. Classic translation factor GTPase family. BipA subfamily. Monomer.

The protein resides in the cytoplasm. It carries out the reaction GTP + H2O = GDP + phosphate + H(+). Its function is as follows. A 50S ribosomal subunit assembly protein with GTPase activity, required for 50S subunit assembly at low temperatures, may also play a role in translation. Binds GTP and analogs. Binds the 70S ribosome between the 30S and 50S subunits, in a similar position as ribosome-bound EF-G; it contacts a number of ribosomal proteins, both rRNAs and the A-site tRNA. The sequence is that of Large ribosomal subunit assembly factor BipA from Synechocystis sp. (strain ATCC 27184 / PCC 6803 / Kazusa).